Here is a 228-residue protein sequence, read N- to C-terminus: Probable methylthioribulose-1-phosphate dehydratase (228 aa).

Cys-87 contributes to the substrate binding site. Positions 105 and 107 each coordinate Zn(2+). Glu-129 acts as the Proton donor/acceptor in catalysis. His-185 lines the Zn(2+) pocket.

Belongs to the aldolase class II family. MtnB subfamily. Requires Zn(2+) as cofactor.

It localises to the cytoplasm. It carries out the reaction 5-(methylsulfanyl)-D-ribulose 1-phosphate = 5-methylsulfanyl-2,3-dioxopentyl phosphate + H2O. It functions in the pathway amino-acid biosynthesis; L-methionine biosynthesis via salvage pathway; L-methionine from S-methyl-5-thio-alpha-D-ribose 1-phosphate: step 2/6. Catalyzes the dehydration of methylthioribulose-1-phosphate (MTRu-1-P) into 2,3-diketo-5-methylthiopentyl-1-phosphate (DK-MTP-1-P). This Drosophila willistoni (Fruit fly) protein is Probable methylthioribulose-1-phosphate dehydratase.